We begin with the raw amino-acid sequence, 240 residues long: Protein FAM246C (240 aa).

Disordered regions lie at residues 1 to 117 and 161 to 240; these read MAEP…WRSA and LPAA…TRAA. Basic and acidic residues-rich tracts occupy residues 19 to 31 and 60 to 74; these read EVLR…RRDP and AASR…KLVE. Residues 165–175 are compositionally biased toward pro residues; it reads SPAPSPAPRPA. The segment covering 176–187 has biased composition (low complexity); sequence ARPCRGRSAPLA.

This sequence belongs to the FAM246 family.

The sequence is that of Protein FAM246C from Homo sapiens (Human).